Consider the following 71-residue polypeptide: Protein SlyX homolog (71 aa).

This sequence belongs to the SlyX family.

The protein is Protein SlyX homolog of Rhodopseudomonas palustris (strain HaA2).